Consider the following 240-residue polypeptide: Sugar fermentation stimulation protein homolog (240 aa).

This sequence belongs to the SfsA family.

In Saccharolobus islandicus (strain L.S.2.15 / Lassen #1) (Sulfolobus islandicus), this protein is Sugar fermentation stimulation protein homolog.